The sequence spans 469 residues: Diaminopimelate decarboxylase (469 aa).

The disordered stretch occupies residues 1–23 (MLSTEMPLPTTGSTLLKTPASPS). Position 93 is an N6-(pyridoxal phosphate)lysine (lysine 93). Residues glycine 279 and 321 to 324 (EPGR) each bind pyridoxal 5'-phosphate. Residues arginine 324, arginine 361, and tyrosine 365 each coordinate substrate. Cysteine 392 functions as the Proton donor in the catalytic mechanism. Residues glutamate 393 and tyrosine 421 each coordinate substrate. Pyridoxal 5'-phosphate is bound at residue tyrosine 421.

The protein belongs to the Orn/Lys/Arg decarboxylase class-II family. LysA subfamily. As to quaternary structure, homodimer. Pyridoxal 5'-phosphate serves as cofactor.

The catalysed reaction is meso-2,6-diaminopimelate + H(+) = L-lysine + CO2. The protein operates within amino-acid biosynthesis; L-lysine biosynthesis via DAP pathway; L-lysine from DL-2,6-diaminopimelate: step 1/1. Its function is as follows. Specifically catalyzes the decarboxylation of meso-diaminopimelate (meso-DAP) to L-lysine. The protein is Diaminopimelate decarboxylase of Synechocystis sp. (strain ATCC 27184 / PCC 6803 / Kazusa).